The chain runs to 255 residues: Large ribosomal subunit protein uL4 (255 aa).

Belongs to the universal ribosomal protein uL4 family. As to quaternary structure, part of the 50S ribosomal subunit.

One of the primary rRNA binding proteins, this protein initially binds near the 5'-end of the 23S rRNA. It is important during the early stages of 50S assembly. It makes multiple contacts with different domains of the 23S rRNA in the assembled 50S subunit and ribosome. In terms of biological role, forms part of the polypeptide exit tunnel. The polypeptide is Large ribosomal subunit protein uL4 (Thermococcus gammatolerans (strain DSM 15229 / JCM 11827 / EJ3)).